Consider the following 431-residue polypeptide: MDWDLNAAGAWDLAELEQDHAAAAPSSGGHAANAAAAGTGTESRPPAPGAAGAPAECSVDLKLGGMGECEPGAARREREAAAGAAKRPRPAGPGGQQQQQCPSCAVDGCRADLGKCRDYHRRHKVCEAHSKTPVVVVAGREMRFCQQCSRFHLLAEFDADKRSCRKRLDGHNRRRRKPQPDTMASASFIASQQGTRFSPFAHPRLEASWPPGVMKTEESPYHITHQIPLGSSSSSRQQHFVALGAATPAYAKEGRRFPFLQEGEISFATGVVLEPPAAAPACQPLLRTGAPSESSGAGGSKMFSDQGLARVLDSDCALSLLSAPANSSGIDVSRMVRPTEHVPMAQQPVVPGLQFGSASWFPRPQASTGGSFVPFCPAAVEGEQQLNAVLGPNDSEVSMNYGGMFHVGGGSGGGEGSSDGGTSSSMPFSWQ.

2 disordered regions span residues 18–55 (QDHAAAAPSSGGHAANAAAAGTGTESRPPAPGAAGAPA) and 68–102 (ECEPGAARREREAAAGAAKRPRPAGPGGQQQQQCP). A compositionally biased stretch (low complexity) spans 21–41 (AAAAPSSGGHAANAAAAGTGT). An SBP-type zinc finger spans residues 101-178 (CPSCAVDGCR…DGHNRRRRKP (78 aa)). C104, C109, C126, H129, C145, C148, H152, and C164 together coordinate Zn(2+). Residues 408–419 (GGGSGGGEGSSD) show a composition bias toward gly residues. A disordered region spans residues 408 to 431 (GGGSGGGEGSSDGGTSSSMPFSWQ).

Monomer and homodimer. Strongly expressed in immature ears and weakly in husks. Found in the inflorescence meristem of the developing ear, in the spikelet pair primordia, the glume primordia, the cupule forming region and other floral organs. Not detected in other tissues.

Its function is as follows. SBP transcriptional regulator probably involved in the domestication of maize. Acts as a transcriptional repressor binding to a 5'-GTAC-3' motif. May repress the growth of lateral branches in length and numbers. This Zea mays (Maize) protein is Teosinte glume architecture 1.